Here is a 711-residue protein sequence, read N- to C-terminus: Polyribonucleotide nucleotidyltransferase (711 aa).

2 residues coordinate Mg(2+): Asp-486 and Asp-492. Residues 553–612 (PRIHTIKISTDKIKDVIGKGGSVIRALTEETGTTIEIEDDGTVKIAATDGEKAKYAIRRI) form the KH domain. The 69-residue stretch at 622-690 (GRIYNSKVTR…RQGRVRLSIK (69 aa)) folds into the S1 motif domain. Residues 689 to 711 (IKEATEQSQPAAAPEAPASEQAE) are disordered. Positions 694–711 (EQSQPAAAPEAPASEQAE) are enriched in low complexity.

The protein belongs to the polyribonucleotide nucleotidyltransferase family. As to quaternary structure, component of the RNA degradosome, which is a multiprotein complex involved in RNA processing and mRNA degradation. Mg(2+) is required as a cofactor.

It localises to the cytoplasm. The enzyme catalyses RNA(n+1) + phosphate = RNA(n) + a ribonucleoside 5'-diphosphate. Involved in mRNA degradation. Catalyzes the phosphorolysis of single-stranded polyribonucleotides processively in the 3'- to 5'-direction. This chain is Polyribonucleotide nucleotidyltransferase, found in Salmonella typhi.